Consider the following 129-residue polypeptide: MNIIQTFEAEQIARLVSERPVPEFVPGDTLRVLVKVVEGERTRTQAFEGVCIARSNRGVNSNFTIRKISYGEGVERVFPLYSPTIAEIQVVRRGDVRRAKLYYLRGRSGKSARIAEKARSTTTETAAAE.

It belongs to the bacterial ribosomal protein bL19 family.

Functionally, this protein is located at the 30S-50S ribosomal subunit interface and may play a role in the structure and function of the aminoacyl-tRNA binding site. This Granulibacter bethesdensis (strain ATCC BAA-1260 / CGDNIH1) protein is Large ribosomal subunit protein bL19.